The primary structure comprises 154 residues: uncharacterized protein (154 aa).

Coiled-coil stretches lie at residues 8–48 (DEEV…AIEA) and 89–138 (VQEL…RGLV).

This is an uncharacterized protein from Treponema pallidum (strain Nichols).